A 202-amino-acid polypeptide reads, in one-letter code: Small ribosomal subunit protein uS2 (202 aa).

This sequence belongs to the universal ribosomal protein uS2 family.

The polypeptide is Small ribosomal subunit protein uS2 (rps2) (Pyrococcus horikoshii (strain ATCC 700860 / DSM 12428 / JCM 9974 / NBRC 100139 / OT-3)).